The chain runs to 126 residues: Flagellar assembly factor FliW (126 aa).

It belongs to the FliW family. Interacts with translational regulator CsrA and flagellin(s).

The protein localises to the cytoplasm. Acts as an anti-CsrA protein, binds CsrA and prevents it from repressing translation of its target genes, one of which is flagellin. Binds to flagellin and participates in the assembly of the flagellum. In Sulfurimonas denitrificans (strain ATCC 33889 / DSM 1251) (Thiomicrospira denitrificans (strain ATCC 33889 / DSM 1251)), this protein is Flagellar assembly factor FliW.